The sequence spans 252 residues: tRNA1(Val) (adenine(37)-N6)-methyltransferase (252 aa).

It belongs to the methyltransferase superfamily. tRNA (adenine-N(6)-)-methyltransferase family.

Its subcellular location is the cytoplasm. It carries out the reaction adenosine(37) in tRNA1(Val) + S-adenosyl-L-methionine = N(6)-methyladenosine(37) in tRNA1(Val) + S-adenosyl-L-homocysteine + H(+). Specifically methylates the adenine in position 37 of tRNA(1)(Val) (anticodon cmo5UAC). This is tRNA1(Val) (adenine(37)-N6)-methyltransferase from Proteus mirabilis (strain HI4320).